The sequence spans 278 residues: MKYIGAHVSAAGGLDQVIFRSKELGATAFSFFLSNPLRWNLIQFRDETIKKFIFLCKKFNYVSDQILPHSSYLINLGHPSDEHLKKSRLLFVNEIINCKKLNLSLLNFHPGSHLRKISEQHCLIRVADSINFALQNTVGVKLVIENTAGQGSNIGYCFEHLAQIIHKVKEKDRIGICLDTCHLHASGYDLKTELGCRQTFKAFNDIVGLHYLSGMHINDSKTKRNSRIDRHHNLGQGYIGKSSIRWIIRNINFKLFPMILETTNNKLWKDEINWINSL.

Residues His69, His109, Glu145, Asp179, His182, His216, Asp229, His231, and Glu261 each coordinate Zn(2+).

This sequence belongs to the AP endonuclease 2 family. The cofactor is Zn(2+).

It catalyses the reaction Endonucleolytic cleavage to 5'-phosphooligonucleotide end-products.. Functionally, endonuclease IV plays a role in DNA repair. It cleaves phosphodiester bonds at apurinic or apyrimidinic (AP) sites, generating a 3'-hydroxyl group and a 5'-terminal sugar phosphate. This chain is Probable endonuclease 4, found in Buchnera aphidicola subsp. Baizongia pistaciae (strain Bp).